The chain runs to 333 residues: Holliday junction branch migration complex subunit RuvB (333 aa).

The large ATPase domain (RuvB-L) stretch occupies residues Met1–Tyr181. Residues Leu20, Arg21, Gly62, Lys65, Thr66, Thr67, Glu128–Phe130, Arg171, Tyr181, and Arg218 contribute to the ATP site. Position 66 (Thr66) interacts with Mg(2+). The small ATPAse domain (RuvB-S) stretch occupies residues Gln182–Asp252. The head domain (RuvB-H) stretch occupies residues Ala255 to Glu333. DNA is bound by residues Arg291, Arg310, and Arg315.

The protein belongs to the RuvB family. In terms of assembly, homohexamer. Forms an RuvA(8)-RuvB(12)-Holliday junction (HJ) complex. HJ DNA is sandwiched between 2 RuvA tetramers; dsDNA enters through RuvA and exits via RuvB. An RuvB hexamer assembles on each DNA strand where it exits the tetramer. Each RuvB hexamer is contacted by two RuvA subunits (via domain III) on 2 adjacent RuvB subunits; this complex drives branch migration. In the full resolvosome a probable DNA-RuvA(4)-RuvB(12)-RuvC(2) complex forms which resolves the HJ.

It localises to the cytoplasm. It catalyses the reaction ATP + H2O = ADP + phosphate + H(+). The RuvA-RuvB-RuvC complex processes Holliday junction (HJ) DNA during genetic recombination and DNA repair, while the RuvA-RuvB complex plays an important role in the rescue of blocked DNA replication forks via replication fork reversal (RFR). RuvA specifically binds to HJ cruciform DNA, conferring on it an open structure. The RuvB hexamer acts as an ATP-dependent pump, pulling dsDNA into and through the RuvAB complex. RuvB forms 2 homohexamers on either side of HJ DNA bound by 1 or 2 RuvA tetramers; 4 subunits per hexamer contact DNA at a time. Coordinated motions by a converter formed by DNA-disengaged RuvB subunits stimulates ATP hydrolysis and nucleotide exchange. Immobilization of the converter enables RuvB to convert the ATP-contained energy into a lever motion, pulling 2 nucleotides of DNA out of the RuvA tetramer per ATP hydrolyzed, thus driving DNA branch migration. The RuvB motors rotate together with the DNA substrate, which together with the progressing nucleotide cycle form the mechanistic basis for DNA recombination by continuous HJ branch migration. Branch migration allows RuvC to scan DNA until it finds its consensus sequence, where it cleaves and resolves cruciform DNA. The chain is Holliday junction branch migration complex subunit RuvB from Lactococcus lactis subsp. cremoris (strain SK11).